A 525-amino-acid chain; its full sequence is ATP synthase subunit alpha (525 aa).

An ATP-binding site is contributed by 172 to 179 (GDRQTGKT).

Belongs to the ATPase alpha/beta chains family. F-type ATPases have 2 components, CF(1) - the catalytic core - and CF(0) - the membrane proton channel. CF(1) has five subunits: alpha(3), beta(3), gamma(1), delta(1), epsilon(1). CF(0) has three main subunits: a(1), b(2) and c(9-12). The alpha and beta chains form an alternating ring which encloses part of the gamma chain. CF(1) is attached to CF(0) by a central stalk formed by the gamma and epsilon chains, while a peripheral stalk is formed by the delta and b chains.

The protein localises to the cell inner membrane. The enzyme catalyses ATP + H2O + 4 H(+)(in) = ADP + phosphate + 5 H(+)(out). Functionally, produces ATP from ADP in the presence of a proton gradient across the membrane. The alpha chain is a regulatory subunit. The chain is ATP synthase subunit alpha from Parabacteroides distasonis (strain ATCC 8503 / DSM 20701 / CIP 104284 / JCM 5825 / NCTC 11152).